Consider the following 195-residue polypeptide: Small ribosomal subunit protein uS10c (195 aa).

The transit peptide at 1–59 (MATSSISAALLSPLTLRNASSSSTKQDFSTLSSLNLRRTLTPTLQSGHTLSNSSNFATF) directs the protein to the chloroplast.

Belongs to the universal ribosomal protein uS10 family. As to quaternary structure, component of the chloroplast small ribosomal subunit (SSU). Mature 70S chloroplast ribosomes of higher plants consist of a small (30S) and a large (50S) subunit. The 30S small subunit contains 1 molecule of ribosomal RNA (16S rRNA) and 24 different proteins. The 50S large subunit contains 3 rRNA molecules (23S, 5S and 4.5S rRNA) and 33 different proteins.

It is found in the plastid. Its subcellular location is the chloroplast. Component of the chloroplast ribosome (chloro-ribosome), a dedicated translation machinery responsible for the synthesis of chloroplast genome-encoded proteins, including proteins of the transcription and translation machinery and components of the photosynthetic apparatus. The protein is Small ribosomal subunit protein uS10c (RPS10) of Spinacia oleracea (Spinach).